The sequence spans 1009 residues: DNA ligase 3 (1009 aa).

The transit peptide at 1-42 (MSLAFKIFFPQTLRALSRKELCLFRKHHWRDVRQFSQWSETD) directs the protein to the mitochondrion. A PARP-type zinc finger spans residues 93-185 (FCVDYAKRGT…QITQHIADLS (93 aa)). Zn(2+) contacts are provided by cysteine 105, cysteine 108, histidine 139, and cysteine 142. Serine 210, serine 216, serine 227, and serine 242 each carry phosphoserine. The tract at residues 224–256 (RKFSGFSAKPNNSGEAPSSPTPKRSLSSSKCDP) is disordered. The span at 240-252 (PSSPTPKRSLSSS) shows a compositional bias: low complexity. Interaction with DNA stretches follow at residues 277-280 (PSYN), 318-323 (VYNLND), 388-391 (TKED), and 421-427 (KMNSGAK). Glutamate 506 lines the ATP pocket. Lysine 508 functions as the N6-AMP-lysine intermediate in the catalytic mechanism. 2 residues coordinate ATP: arginine 513 and arginine 528. Residues glutamate 560 and glutamate 655 each coordinate Mg(2+). ATP-binding residues include lysine 660, arginine 671, and lysine 675. Positions 842-917 (AGDEGSSTTG…LATKSSPVKV (76 aa)) are disordered. Low complexity-rich tracts occupy residues 845–854 (EGSSTTGGSS) and 863–877 (SAVS…SAST). A compositionally biased stretch (polar residues) spans 884–898 (LSNSNSKDGNMQTAK). Serine 913 bears the Phosphoserine mark. In terms of domain architecture, BRCT spans 933-1009 (VLLDIFTGVR…IRKRRLVAPC (77 aa)).

This sequence belongs to the ATP-dependent DNA ligase family. Isoform 3 interacts (via BRCT domain) with the nuclear DNA-repair protein XRCC1. Interacts with POLG. Interacts with POLB. Mg(2+) serves as cofactor. As to expression, testis, thymus, prostate and heart.

Its subcellular location is the mitochondrion. It localises to the nucleus. It catalyses the reaction ATP + (deoxyribonucleotide)n-3'-hydroxyl + 5'-phospho-(deoxyribonucleotide)m = (deoxyribonucleotide)n+m + AMP + diphosphate.. Its function is as follows. Isoform 3 functions as a heterodimer with DNA-repair protein XRCC1 in the nucleus and can correct defective DNA strand-break repair and sister chromatid exchange following treatment with ionizing radiation and alkylating agents. Isoform 1 is targeted to mitochondria, where it functions as a DNA ligase in mitochondrial base-excision DNA repair. The sequence is that of DNA ligase 3 (LIG3) from Homo sapiens (Human).